The chain runs to 249 residues: ATP synthase subunit a (249 aa).

A run of 6 helical transmembrane segments spans residues 26–46 (FTNSSLFMVATVAAAGAFLYL), 84–104 (FFPFVFSLFMFVLVANLLGLF), 114–134 (IVVTFALALLVIGTVLVYGFW), 143–163 (LFVPEGVPGVLLPLVVLIEVI), 185–205 (ITLKVFAGFVTSLGALGVAGA), and 208–228 (AVLPLAMTVALTGLELLVAFL).

This sequence belongs to the ATPase A chain family. In terms of assembly, F-type ATPases have 2 components, CF(1) - the catalytic core - and CF(0) - the membrane proton channel. CF(1) has five subunits: alpha(3), beta(3), gamma(1), delta(1), epsilon(1). CF(0) has three main subunits: a(1), b(2) and c(9-12). The alpha and beta chains form an alternating ring which encloses part of the gamma chain. CF(1) is attached to CF(0) by a central stalk formed by the gamma and epsilon chains, while a peripheral stalk is formed by the delta and b chains.

It localises to the cell inner membrane. Functionally, key component of the proton channel; it plays a direct role in the translocation of protons across the membrane. The chain is ATP synthase subunit a from Chelativorans sp. (strain BNC1).